Consider the following 368-residue polypeptide: Alanine racemase (368 aa).

K40 functions as the Proton acceptor; specific for D-alanine in the catalytic mechanism. N6-(pyridoxal phosphate)lysine is present on K40. Position 134 (R134) interacts with substrate. Y263 serves as the catalytic Proton acceptor; specific for L-alanine. Position 310 (M310) interacts with substrate.

Belongs to the alanine racemase family. It depends on pyridoxal 5'-phosphate as a cofactor.

The catalysed reaction is L-alanine = D-alanine. Its pathway is amino-acid biosynthesis; D-alanine biosynthesis; D-alanine from L-alanine: step 1/1. Functionally, catalyzes the interconversion of L-alanine and D-alanine. May also act on other amino acids. The sequence is that of Alanine racemase (alr) from Listeria monocytogenes serotype 4b (strain F2365).